A 93-amino-acid polypeptide reads, in one-letter code: Large ribosomal subunit protein uL23cz/uL23cy (93 aa).

The protein belongs to the universal ribosomal protein uL23 family. In terms of assembly, part of the 50S ribosomal subunit.

It localises to the plastid. It is found in the chloroplast. In terms of biological role, binds to 23S rRNA. The protein is Large ribosomal subunit protein uL23cz/uL23cy (rpl23-A) of Nandina domestica (Heavenly bamboo).